The primary structure comprises 240 residues: Probable transcriptional regulatory protein HPAG1_0159 (240 aa).

This sequence belongs to the TACO1 family.

It is found in the cytoplasm. The chain is Probable transcriptional regulatory protein HPAG1_0159 from Helicobacter pylori (strain HPAG1).